Consider the following 100-residue polypeptide: Small ribosomal subunit protein uS14c (100 aa).

Belongs to the universal ribosomal protein uS14 family. As to quaternary structure, part of the 30S ribosomal subunit.

It is found in the plastid. It localises to the chloroplast. Functionally, binds 16S rRNA, required for the assembly of 30S particles. The protein is Small ribosomal subunit protein uS14c of Huperzia lucidula (Shining clubmoss).